The primary structure comprises 495 residues: uncharacterized protein (495 aa).

FAD-binding residues include S16, E36, W45, D56, Y62, and V105.

It belongs to the FAD-binding monooxygenase family. FAD serves as cofactor.

This is an uncharacterized protein from Mycobacterium tuberculosis (strain CDC 1551 / Oshkosh).